Reading from the N-terminus, the 273-residue chain is MSDMHSLLIAAILGVVEGLTEFLPVSSTGHMIIVGHLLGFEGDTAKTFEVVIQLGSILAVVVMFWRRLFGLIGIHFGRPLQREGESKGRLTLIHILLGMIPAVVLGLVFHDTIKSLFNPINVMYTLVVGGLLLIAAECLKPKEPRAPGLDDMTYRQAFMIGCFQCLALWPGFSRSGATISGGMLMGVSRYAASEFSFLLAVPMMMGATVLDLYKSWSFLTAADIPMFAVGFVTAFVVALIAIKTFLQLIKRISFIPFAIYRFVVAAAVYVVFF.

7 helical membrane passes run 6-26, 45-65, 90-110, 116-136, 190-210, 222-242, and 252-272; these read SLLIAAILGVVEGLTEFLPVS, AKTFEVVIQLGSILAVVVMFW, LTLIHILLGMIPAVVLGLVFH, LFNPINVMYTLVVGGLLLIAA, YAASEFSFLLAVPMMMGATVL, ADIPMFAVGFVTAFVVALIAI, and ISFIPFAIYRFVVAAAVYVVF.

This sequence belongs to the UppP family.

It localises to the cell inner membrane. The enzyme catalyses di-trans,octa-cis-undecaprenyl diphosphate + H2O = di-trans,octa-cis-undecaprenyl phosphate + phosphate + H(+). Functionally, catalyzes the dephosphorylation of undecaprenyl diphosphate (UPP). Confers resistance to bacitracin. This is Undecaprenyl-diphosphatase from Salmonella paratyphi C (strain RKS4594).